The following is a 197-amino-acid chain: dITP/XTP pyrophosphatase (197 aa).

8 to 13 (TGNPGK) provides a ligand contact to substrate. Residues Glu40 and Asp69 each coordinate Mg(2+). The active-site Proton acceptor is Asp69. Substrate contacts are provided by residues Ser70, 154–157 (FGYD), Lys177, and 182–183 (HR).

The protein belongs to the HAM1 NTPase family. In terms of assembly, homodimer. Requires Mg(2+) as cofactor.

It catalyses the reaction XTP + H2O = XMP + diphosphate + H(+). The catalysed reaction is dITP + H2O = dIMP + diphosphate + H(+). The enzyme catalyses ITP + H2O = IMP + diphosphate + H(+). Pyrophosphatase that catalyzes the hydrolysis of nucleoside triphosphates to their monophosphate derivatives, with a high preference for the non-canonical purine nucleotides XTP (xanthosine triphosphate), dITP (deoxyinosine triphosphate) and ITP. Seems to function as a house-cleaning enzyme that removes non-canonical purine nucleotides from the nucleotide pool, thus preventing their incorporation into DNA/RNA and avoiding chromosomal lesions. The protein is dITP/XTP pyrophosphatase of Pectobacterium atrosepticum (strain SCRI 1043 / ATCC BAA-672) (Erwinia carotovora subsp. atroseptica).